A 92-amino-acid chain; its full sequence is Putative transmembrane protein ORF92 (92 aa).

The next 3 helical transmembrane spans lie at 11-28 (FVKGIVLLALTSGATYAI), 32-52 (FFSSNYCAIARIIQALLLFAS), and 54-74 (FLFDSAGALILGVIVLIIGVG).

It localises to the host membrane. The polypeptide is Putative transmembrane protein ORF92 (Acidianus convivator (ABV)).